The chain runs to 133 residues: ATP synthase epsilon chain, chloroplastic (133 aa).

It belongs to the ATPase epsilon chain family. F-type ATPases have 2 components, CF(1) - the catalytic core - and CF(0) - the membrane proton channel. CF(1) has five subunits: alpha(3), beta(3), gamma(1), delta(1), epsilon(1). CF(0) has three main subunits: a, b and c.

It localises to the plastid. The protein localises to the chloroplast thylakoid membrane. Produces ATP from ADP in the presence of a proton gradient across the membrane. In Gossypium barbadense (Sea Island cotton), this protein is ATP synthase epsilon chain, chloroplastic.